The chain runs to 192 residues: Pyridoxal 5'-phosphate synthase subunit PdxT (192 aa).

Residue 46 to 48 (GES) participates in L-glutamine binding. Catalysis depends on Cys75, which acts as the Nucleophile. L-glutamine is bound by residues Arg101 and 129-130 (IR). Residues His166 and Glu168 each act as charge relay system in the active site.

This sequence belongs to the glutaminase PdxT/SNO family. In terms of assembly, in the presence of PdxS, forms a dodecamer of heterodimers. Only shows activity in the heterodimer.

It carries out the reaction aldehydo-D-ribose 5-phosphate + D-glyceraldehyde 3-phosphate + L-glutamine = pyridoxal 5'-phosphate + L-glutamate + phosphate + 3 H2O + H(+). The catalysed reaction is L-glutamine + H2O = L-glutamate + NH4(+). It functions in the pathway cofactor biosynthesis; pyridoxal 5'-phosphate biosynthesis. Its function is as follows. Catalyzes the hydrolysis of glutamine to glutamate and ammonia as part of the biosynthesis of pyridoxal 5'-phosphate. The resulting ammonia molecule is channeled to the active site of PdxS. This Staphylococcus carnosus (strain TM300) protein is Pyridoxal 5'-phosphate synthase subunit PdxT.